Consider the following 1515-residue polypeptide: DNA topoisomerase 2-binding protein 1 (1515 aa).

BRCT domains follow at residues 101 to 189 (VYNM…KYTD) and 195 to 284 (FKCP…IYKA). Thr-298 carries the phosphothreonine modification. BRCT domains are found at residues 353–443 (APED…SYIH), 551–636 (REEG…SNPL), and 644–741 (SGVT…HFLV). The interaction with CIP2A stretch occupies residues 759 to 893 (VSSNPDLPAH…TDSHSASPQL (135 aa)). Thr-782 is subject to Phosphothreonine. The segment at 799-826 (SQQRGQDPTFPPVRQPLTKEPSLHLDTP) is disordered. A Phosphothreonine modification is found at Thr-851. Residues Ser-862, Ser-863, Ser-866, Ser-888, and Ser-890 each carry the phosphoserine modification. Over residues 880-891 (SSRNTDSHSASP) the composition is skewed to polar residues. Residues 880–901 (SSRNTDSHSASPQLKGAHLEEE) are disordered. The BRCT 6 domain maps to 902-993 (ETRKPLDSVV…KHLPESLYPH (92 aa)). Residues 1020–1055 (VSASKDDGPDHLSVEGNETNTMGTNDKESPLLNGSG) are disordered. Positions 1023 to 1032 (SKDDGPDHLS) are enriched in basic and acidic residues. A Phosphothreonine modification is found at Thr-1064. The segment covering 1097-1116 (SRSSCNSASSTPDSARSVRS) has biased composition (low complexity). Disordered stretches follow at residues 1097–1119 (SRSSCNSASSTPDSARSVRSGRS), 1203–1255 (VTQA…TQEE), and 1491–1515 (KKGGPGLPQKRKTPAENVVKRPRVH). Residues 1217-1229 (PPVAERPLIPEPQ) show a composition bias toward pro residues. In terms of domain architecture, BRCT 7 spans 1255-1347 (ETHRKVKKQY…RFVQEEDYEW (93 aa)). A Nuclear localization signal motif is present at residues 1510–1513 (KRPR).

It belongs to the TOPBP1 family. In terms of assembly, interacts (via BRCT domains 1 and 2) with (phosphorylated) MDC1; promoting TOPBP1 recruitment to DNA damage sites during mitosis. Interacts (via BRCT domains 7 and 8) with (autophosphorylated) ATR; promoting activation of ATR. Interacts (via BRCT domains 7 and 8) with (phosphorylated) POLQ; specifically binds POLQ phosphorylated by PLK1, promoting POLQ recruitment to DNA damage sites. Interacts (via BRCT domains 1 and 2) with (phosphorylated) RAD9A. Interacts (via BRCT domain 2) with (phosphorylated) TP53BP1. Interacts (via BRCT domain 2) with (phosphorylated) HTATSF1. Interacts (via BRCT domains 7 and 8) with (phosphorylated) RAD51; promoting RAD51 recruitment to damaged chromatin. Interacts with CIP2A; forming the CIP2A-TOPBP1 complex. Interacts with POLE. Interacts with UBR5. Interacts with E2F1. Interacts with PML. Interacts with SMARCA2. Interacts with SMARCA4. Interacts with RHNO1. May interact with TOP2B. Interacts with TICRR. Interacts with HELB. In terms of processing, phosphorylated on serine and threonine residues in response to X-ray irradiation. Ubiquitinated and degraded by the proteasome. X-ray irradiation reduces ubiquitination. Deubiquitinated by USP13; leading to TOPBP1 stabilizion and activation of the ATR-TOPBP1 axis pathway. Highly expressed in testis.

It localises to the nucleus. The protein resides in the chromosome. Its subcellular location is the cytoplasm. It is found in the cytoskeleton. The protein localises to the microtubule organizing center. It localises to the centrosome. The protein resides in the spindle pole. Functionally, scaffold protein that acts as a key protein-protein adapter in DNA replication and DNA repair. Composed of multiple BRCT domains, which specifically recognize and bind phosphorylated proteins, bringing proteins together into functional combinations. Required for DNA replication initiation but not for the formation of pre-replicative complexes or the elongation stages. Necessary for the loading of replication factors onto chromatin, including GMNC, CDC45, DNA polymerases and components of the GINS complex. Plays a central role in DNA repair by bridging proteins and promoting recruitment of proteins to DNA damage sites. Involved in double-strand break (DSB) repair via homologous recombination in S-phase by promoting the exchange between the DNA replication factor A (RPA) complex and RAD51. Mechanistically, TOPBP1 is recruited to DNA damage sites in S-phase via interaction with phosphorylated HTATSF1, and promotes the loading of RAD51, thereby facilitating RAD51 nucleofilaments formation and RPA displacement, followed by homologous recombination. Involved in microhomology-mediated end-joining (MMEJ) DNA repair by promoting recruitment of polymerase theta (POLQ) to DNA damage sites during mitosis. MMEJ is an alternative non-homologous end-joining (NHEJ) machinery that takes place during mitosis to repair DSBs in DNA that originate in S-phase. Recognizes and binds POLQ phosphorylated by PLK1, enabling its recruitment to DSBs for subsequent repair. Involved in G1 DNA damage checkpoint by acting as a molecular adapter that couples TP53BP1 and the 9-1-1 complex. In response to DNA damage, triggers the recruitment of checkpoint signaling proteins on chromatin, which activate the CHEK1 signaling pathway and block S-phase progression. Acts as an activator of the kinase activity of ATR. Also required for chromosomal stability when DSBs occur during mitosis by forming filamentous assemblies that bridge MDC1 and tether broken chromosomes during mitosis. Together with CIP2A, plays an essential role in the response to genome instability generated by the presence of acentric chromosome fragments derived from shattered chromosomes within micronuclei. Micronuclei, which are frequently found in cancer cells, consist of chromatin surrounded by their own nuclear membrane: following breakdown of the micronuclear envelope, a process associated with chromothripsis, the CIP2A-TOPBP1 complex tethers chromosome fragments during mitosis to ensure clustered segregation of the fragments to a single daughter cell nucleus, facilitating re-ligation with limited chromosome scattering and loss. Recruits the SWI/SNF chromatin remodeling complex to E2F1-responsive promoters, thereby down-regulating E2F1 activity and inhibiting E2F1-dependent apoptosis during G1/S transition and after DNA damage. The protein is DNA topoisomerase 2-binding protein 1 of Mus musculus (Mouse).